A 189-amino-acid chain; its full sequence is Ornithine decarboxylase antizyme 2 (189 aa).

Ser-186 carries the post-translational modification Phosphoserine.

Belongs to the ODC antizyme family. Interacts with ODC1 and thereby sterically blocks ODC homodimerization. Interacts with AZIN2; this interaction disrupts the interaction between the antizyme and ODC1.

Its subcellular location is the nucleus. Functionally, ornithine decarboxylase (ODC) antizyme protein that negatively regulates ODC activity and intracellular polyamine biosynthesis and uptake in response to increased intracellular polyamine levels. Binds to ODC monomers, inhibiting the assembly of the functional ODC homodimers. Does not target the ODC monomers for degradation, which allows a protein synthesis-independent restoration of ODC activity. Involved in the translocation of AZIN2 from ER-Golgi intermediate compartment (ERGIC) to the cytosol. The sequence is that of Ornithine decarboxylase antizyme 2 (Oaz2) from Mus musculus (Mouse).